Here is a 527-residue protein sequence, read N- to C-terminus: Protein Lilipod (527 aa).

At 1-22 (MDEEEEEEVTDLKLQLFHNTVR) the chain is on the extracellular side. A helical membrane pass occupies residues 23–43 (EHIIFLLLIILLYSSSYVVVS). Over 44–65 (RFRRRDRDDLYSNDEDEVLVYR) the chain is Cytoplasmic. The helical transmembrane segment at 66–86 (ISFWLCTFTLAVAEGAAMLLP) threads the bilayer. The Extracellular segment spans residues 87 to 117 (VSIASNEVLLLYPNSYYVKWLNSSLIQGLWN). The chain crosses the membrane as a helical span at residues 118-138 (HVFLFSNLSLFIFLPFVYLFS). Over 139 to 160 (ESTGFVGNKKGILPRVYETFTV) the chain is Cytoplasmic. The chain crosses the membrane as a helical span at residues 161-181 (FMLMAIIVLVLTAVLSAVFGI). Topologically, residues 182 to 194 (EKLQFFWFLNLGS) are extracellular. A helical transmembrane segment spans residues 195–215 (VHLPFLYSCVSFLGVMLMLIC). Over 216–341 (TPYGFVRLFG…LRTSSTFQRT (126 aa)) the chain is Cytoplasmic. A helical membrane pass occupies residues 342–362 (FVYPLAMLLLLFCTAVTILLV). At 363–395 (VQNTLELLIGIKALPLSTRQFALGISSLSKLGP) the chain is on the extracellular side. Residues 396 to 416 (FGAGLEVCLIFYLGATSVVGF) form a helical membrane-spanning segment. The Cytoplasmic segment spans residues 417–433 (YSMPFMRKVCPKRRQTS). The helical transmembrane segment at 434–454 (LPQLMLNCGFMLVLSSALPLL) threads the bilayer. Residues 455–468 (SRIIGITNFDLLGD) are Extracellular-facing. A helical transmembrane segment spans residues 469–489 (FGAIEWLGNFQIVLLYNLVFG). Residues 490-527 (TTTALCLANKFTATVRRELRARLVENYVLFTNYISFIN) are Cytoplasmic-facing.

It belongs to the LIMR family. In the ovary, detected in germline stem cells and their progeny. Also detected in the somatic follicular epithelium.

The protein localises to the cell membrane. Functionally, required during oogenesis to promote self-renewal of germline stem cells, probably by enhancing BMP signaling activity. This chain is Protein Lilipod, found in Drosophila melanogaster (Fruit fly).